The following is a 356-amino-acid chain: Alpha-N-acetylneuraminide alpha-2,8-sialyltransferase (356 aa).

Topologically, residues 1–29 (MSPCGRARRQTSRGAMAVLAWKFPRTRLP) are cytoplasmic. A helical; Signal-anchor for type II membrane protein membrane pass occupies residues 30–48 (MGASALCVVVLCWLYIFPV). The Lumenal segment spans residues 49–356 (YRLPNEKEIV…CEDTSLQPTS (308 aa)). Asn71 and Asn119 each carry an N-linked (GlcNAc...) asparagine glycan. Cystine bridges form between Cys138/Cys287 and Cys152/Cys347. The CMP-N-acetyl-beta-neuraminate site is built by Asn143 and Asn166. N-linked (GlcNAc...) asparagine glycans are attached at residues Asn214 and Asn245. 5 residues coordinate CMP-N-acetyl-beta-neuraminate: Ser274, Thr275, Gly276, Trp296, and His310. His322 serves as the catalytic Proton donor/acceptor.

The protein belongs to the glycosyltransferase 29 family. As to expression, strongly expressed in melanoma cell lines, adult and fetal brain and to a lesser extent in adult and fetal lung.

The protein resides in the golgi apparatus membrane. The enzyme catalyses an N-acetyl-alpha-neuraminyl-(2-&gt;3)-beta-D-galactosyl derivative + CMP-N-acetyl-beta-neuraminate = an N-acetyl-alpha-neuraminyl-(2-&gt;8)-N-acetyl-alpha-neuraminyl-(2-&gt;3)-beta-D-galactosyl derivative + CMP + H(+). It carries out the reaction a ganglioside GM3 (d18:1(4E)) + CMP-N-acetyl-beta-neuraminate = a ganglioside GD3 (d18:1(4E)) + CMP + H(+). The catalysed reaction is a ganglioside GD3 (d18:1(4E)) + CMP-N-acetyl-beta-neuraminate = a ganglioside GT3 (d18:1(4E)) + CMP + H(+). It catalyses the reaction a ganglioside GD1a (d18:1(4E)) + CMP-N-acetyl-beta-neuraminate = a ganglioside GT1a (d18:1(4E)) + CMP + H(+). The enzyme catalyses a ganglioside GT1b (d18:1(4E)) + CMP-N-acetyl-beta-neuraminate = a ganglioside GQ1b (d18:1(4E)) + CMP + H(+). It carries out the reaction a ganglioside GM1b (d18:1(4E)) + CMP-N-acetyl-beta-neuraminate = a ganglioside GD1c (d18:1(4E)) + CMP + H(+). The catalysed reaction is a ganglioside GD3 + CMP-N-acetyl-beta-neuraminate = a ganglioside GT3 + CMP + H(+). It catalyses the reaction [alpha-N-acetylneuraminyl-(2-&gt;8)](n)-alpha-N-acetylneuraminyl-(2-&gt;8)-alpha-N-acetylneuraminyl-(2-&gt;3)-beta-D-galactosyl-(1-&gt;4)-beta-D-glucosyl-(1&lt;-&gt;1)-ceramide + CMP-N-acetyl-beta-neuraminate = [alpha-N-acetylneuraminyl-(2-&gt;8)](n+1)-alpha-N-acetylneuraminyl-(2-&gt;8)-alpha-N-acetylneuraminyl-(2-&gt;3)-beta-D-galactosyl-(1-&gt;4)-beta-D-glucosyl-(1&lt;-&gt;1)-ceramide + CMP + H(+). It participates in protein modification; protein glycosylation. It functions in the pathway lipid metabolism; sphingolipid metabolism. Catalyzes the addition of sialic acid in alpha 2,8-linkage to the sialic acid moiety of the ganglioside GM3 to form ganglioside GD3; gangliosides are a subfamily of complex glycosphingolipds that contain one or more residues of sialic acid. Can catalyze the addition of a second alpha-2,8-sialic acid to GD3 to form GT3. Can use GM1b, GD1a and GT1b as acceptor substrates to synthesize GD1c, GT1a and GQ1b respectively. Can synthesize unusual tetra- and pentasialylated lactosylceramide derivatives identified as GQ3 (II3Neu5Ac4-Gg2Cer) and GP3 (II3Neu5Ac5-Gg2Cer) in breast cancer cells. The protein is Alpha-N-acetylneuraminide alpha-2,8-sialyltransferase of Homo sapiens (Human).